Here is a 532-residue protein sequence, read N- to C-terminus: Fatty-acid amide hydrolase 2-A (532 aa).

Residues 9–29 (FLGRLLRAVVWILFAAFKLFA) form a helical membrane-spanning segment. Active-site charge relay system residues include Lys129 and Ser204. Ser228 (acyl-ester intermediate) is an active-site residue.

This sequence belongs to the amidase family.

The protein localises to the membrane. The enzyme catalyses N-(5Z,8Z,11Z,14Z-eicosatetraenoyl)-ethanolamine + H2O = ethanolamine + (5Z,8Z,11Z,14Z)-eicosatetraenoate. It carries out the reaction (9Z)-octadecenamide + H2O = (9Z)-octadecenoate + NH4(+). The polypeptide is Fatty-acid amide hydrolase 2-A (faah2a) (Danio rerio (Zebrafish)).